A 403-amino-acid chain; its full sequence is Riboflavin biosynthesis protein RibBA (403 aa).

A DHBP synthase region spans residues 1–204; it reads MKNKVFASIG…IGELVNYRRR (204 aa). D-ribulose 5-phosphate is bound by residues 30–31, Asp-35, 143–147, and Glu-167; these read RE and RTGHT. Glu-31 contributes to the Mg(2+) binding site. His-146 lines the Mg(2+) pocket. The segment at 205-403 is GTP cyclohydrolase II; the sequence is TEKFISEIVN…EKMGHMLKKV (199 aa). 255 to 259 is a GTP binding site; sequence RVHSS. The Zn(2+) site is built by Cys-260, Cys-271, and Cys-273. GTP is bound by residues Gln-276, 298-300, and Thr-320; that span reads EGR. The Proton acceptor; for GTP cyclohydrolase activity role is filled by Asp-332. Arg-334 serves as the catalytic Nucleophile; for GTP cyclohydrolase activity. Positions 355 and 360 each coordinate GTP.

It in the N-terminal section; belongs to the DHBP synthase family. This sequence in the C-terminal section; belongs to the GTP cyclohydrolase II family. The cofactor is Mg(2+). Mn(2+) is required as a cofactor. Requires Zn(2+) as cofactor.

It carries out the reaction D-ribulose 5-phosphate = (2S)-2-hydroxy-3-oxobutyl phosphate + formate + H(+). The enzyme catalyses GTP + 4 H2O = 2,5-diamino-6-hydroxy-4-(5-phosphoribosylamino)-pyrimidine + formate + 2 phosphate + 3 H(+). It participates in cofactor biosynthesis; riboflavin biosynthesis; 2-hydroxy-3-oxobutyl phosphate from D-ribulose 5-phosphate: step 1/1. The protein operates within cofactor biosynthesis; riboflavin biosynthesis; 5-amino-6-(D-ribitylamino)uracil from GTP: step 1/4. Catalyzes the conversion of D-ribulose 5-phosphate to formate and 3,4-dihydroxy-2-butanone 4-phosphate. Functionally, catalyzes the conversion of GTP to 2,5-diamino-6-ribosylamino-4(3H)-pyrimidinone 5'-phosphate (DARP), formate and pyrophosphate. The chain is Riboflavin biosynthesis protein RibBA from Endomicrobium trichonymphae.